The sequence spans 610 residues: MATSLQAPILGSRPPRRTLRFLSFALFSALVLVVASFSSRKSESGSGLRSGSVEPEYAWTNQMLTWQRAGFHFRTVKNYMNDPSGPMYYKGWYHLFYQHNPNYAYWGDISWGHAVSRDLLNWFHLPVAVKPDRWYDIYGVWTGSITVMPDDGRVVMLYTGGTKEKYQIMSVAMAADPSDPLLVEWVKYDEVNPVLRPPPGIGLTDFRDPNPIWYNTTDSTWQLVIGSKNDSLQHTGIAMVYTTKDFINLTLLPGVLHSVDHVGMWECVDLFPVASSGPLIGRGLDRSMMLADNVKHVLKASMNDEWHDYYAIGSYDVATHRWVPDDESVDVGIGMRIDWGKFYASRTFYDPVKERRVMWGYVGETDSGDADVAKGWASFQGIPRTVLFDVKTGTNVLTWPIEEVESLRMTRKDFSDIVVNKGSTVELHVGDANQLDIEAEFEMDKDALETAIEADIGYNCSSSGGAVSRGVLGPFGLFVLANQDLTELTATYFYVSRATDGSLHTHLCHDEMRSSKANDIVKRVVGGTFTVLDGELLSLRILVDHSIVESFAQGGRTSATSRVYPTEAIYERARVFLFNNATGATITAKAVKVWQMNSTSNQYYPFTSSN.

Residues 1-20 (MATSLQAPILGSRPPRRTLR) lie on the Cytoplasmic side of the membrane. A helical; Signal-anchor for type II membrane protein transmembrane segment spans residues 21-38 (FLSFALFSALVLVVASFS). Residues 39 to 610 (SRKSESGSGL…NQYYPFTSSN (572 aa)) are Vacuolar-facing. Substrate contacts are provided by residues 79–82 (YMND), Q98, W106, 141–142 (WT), and 207–208 (RD). Residue D82 is part of the active site. N215, N229, and N248 each carry an N-linked (GlcNAc...) asparagine glycan. Substrate is bound at residue E266. N459 is a glycosylation site (N-linked (GlcNAc...) asparagine). C460 and C508 are joined by a disulfide. 2 N-linked (GlcNAc...) asparagine glycosylation sites follow: N580 and N597.

It belongs to the glycosyl hydrolase 32 family. Post-translationally, might be processed in two N-terminal and C-terminal proteolytic fragments.

Its subcellular location is the vacuole membrane. The catalysed reaction is [1-beta-D-fructofuranosyl-(2-&gt;1)-]m+1 alpha-D-glucopyranoside + [1-beta-D-fructofuranosyl-(2-&gt;1)-]n+1 alpha-D-glucopyranoside = [1-beta-D-fructofuranosyl-(2-&gt;1)-]m alpha-D-glucopyranoside + [1-beta-D-fructofuranosyl-(2-&gt;1)-]n+1 beta-D-fructofuranosyl-(2-&gt;6)-alpha-D-glucopyranoside (m &gt; 0, n &gt;= 0).. In terms of biological role, involved in the synthesis of fructan of the inulin neoseries. Has no 1-FFT activity. In Asparagus officinalis (Garden asparagus), this protein is 6(G)-fructosyltransferase (FT1).